The following is a 319-amino-acid chain: MLKLDLKERDSLDLRCIAGHHGLANPITISDLNRPGLVLSGFFDFVAYRRIQLFGRGEHAYLLALLEQGRYGAIEKMFTFDLPCCIFSHGITPPEKFLHLAEPSSCPILVTRLTSSELSLRLMRVLSNIFAPTIALHGVLVEVYGVGILISGDSGVGKSETALELIERGHRLVADDLVEISCVNGNSLIGRGVHKSIGHHMEIRGLGIINITQLYGVGSIRERKEVQMVVQLEEWNSSKAYDRLGTQELNTTILDVSVPLIEIPVRPGRNIPIILETAAMNERLKRMGYFSAKEFNQSVLKLMEQNAAHAPYYRPDDTY.

Catalysis depends on residues His-137 and Lys-158. Gly-152–Ser-159 contributes to the ATP binding site. Position 159 (Ser-159) interacts with Mg(2+). Catalysis depends on Asp-176, which acts as the Proton acceptor; for phosphorylation activity. Proton donor; for dephosphorylation activity. The tract at residues Met-201–Asn-210 is important for the catalytic mechanism of both phosphorylation and dephosphorylation. Glu-202 provides a ligand contact to Mg(2+). Arg-243 is a catalytic residue. The interval Pro-264 to Arg-269 is important for the catalytic mechanism of dephosphorylation.

Belongs to the HPrK/P family. As to quaternary structure, homohexamer. It depends on Mg(2+) as a cofactor.

The catalysed reaction is [HPr protein]-L-serine + ATP = [HPr protein]-O-phospho-L-serine + ADP + H(+). It catalyses the reaction [HPr protein]-O-phospho-L-serine + phosphate + H(+) = [HPr protein]-L-serine + diphosphate. Its function is as follows. Catalyzes the ATP- as well as the pyrophosphate-dependent phosphorylation of a specific serine residue in HPr, a phosphocarrier protein of the phosphoenolpyruvate-dependent sugar phosphotransferase system (PTS). HprK/P also catalyzes the pyrophosphate-producing, inorganic phosphate-dependent dephosphorylation (phosphorolysis) of seryl-phosphorylated HPr (P-Ser-HPr). This is HPr kinase/phosphorylase from Treponema pallidum subsp. pallidum (strain SS14).